A 356-amino-acid polypeptide reads, in one-letter code: Photosystem II protein D1 4 (356 aa).

3 helical membrane-spanning segments follow: residues tyrosine 32 to threonine 49, histidine 121 to leucine 136, and tryptophan 145 to serine 159. A chlorophyll a-binding site is contributed by histidine 121. 2 residues coordinate [CaMn4O5] cluster: aspartate 173 and aspartate 192. Residues phenylalanine 200–leucine 221 traverse the membrane as a helical segment. Residue histidine 201 participates in chlorophyll a binding. Histidine 218 contributes to the a quinone binding site. Fe cation is bound by residues histidine 218 and histidine 276. Residues leucine 278–methionine 292 traverse the membrane as a helical segment. Histidine 336 provides a ligand contact to [CaMn4O5] cluster.

This sequence belongs to the reaction center PufL/M/PsbA/D family. PSII is composed of 1 copy each of membrane proteins PsbA, PsbB, PsbC, PsbD, PsbE, PsbF, PsbH, PsbI, PsbJ, PsbK, PsbL, PsbM, PsbT, PsbX, PsbY, PsbZ, Psb30/Ycf12, peripheral proteins PsbO, CyanoQ (PsbQ), PsbU, PsbV and a large number of cofactors. It forms dimeric complexes. The D1/D2 heterodimer binds P680, chlorophylls that are the primary electron donor of PSII, and subsequent electron acceptors. It shares a non-heme iron and each subunit binds pheophytin, quinone, additional chlorophylls, carotenoids and lipids. D1 provides most of the ligands for the Mn4-Ca-O5 cluster of the oxygen-evolving complex (OEC). There is also a Cl(-1) ion associated with D1 and D2, which is required for oxygen evolution. The PSII complex binds additional chlorophylls, carotenoids and specific lipids. serves as cofactor. In terms of processing, tyr-164 forms a radical intermediate that is referred to as redox-active TyrZ, YZ or Y-Z.

Its subcellular location is the cellular thylakoid membrane. It carries out the reaction 2 a plastoquinone + 4 hnu + 2 H2O = 2 a plastoquinol + O2. Its function is as follows. Photosystem II (PSII) is a light-driven water:plastoquinone oxidoreductase that uses light energy to abstract electrons from H(2)O, generating O(2) and a proton gradient subsequently used for ATP formation. It consists of a core antenna complex that captures photons, and an electron transfer chain that converts photonic excitation into a charge separation. The D1/D2 (PsbA/PsbD) reaction center heterodimer binds P680, the primary electron donor of PSII as well as several subsequent electron acceptors. This is Photosystem II protein D1 4 from Trichormus variabilis (strain ATCC 29413 / PCC 7937) (Anabaena variabilis).